The sequence spans 389 residues: F-box protein At3g19880 (389 aa).

Residues 2–49 (TMMSDLTQDLVEEILSRVPITSLGAVRSTCKGWNALSKERILCIGEPK) enclose the F-box domain.

The protein is F-box protein At3g19880 of Arabidopsis thaliana (Mouse-ear cress).